Reading from the N-terminus, the 364-residue chain is Uroporphyrinogen decarboxylase (364 aa).

Substrate-binding positions include 28-32, aspartate 78, tyrosine 160, threonine 215, and histidine 333; that span reads RQAGR.

This sequence belongs to the uroporphyrinogen decarboxylase family. In terms of assembly, homodimer.

The protein resides in the cytoplasm. The enzyme catalyses uroporphyrinogen III + 4 H(+) = coproporphyrinogen III + 4 CO2. The protein operates within porphyrin-containing compound metabolism; protoporphyrin-IX biosynthesis; coproporphyrinogen-III from 5-aminolevulinate: step 4/4. Functionally, catalyzes the decarboxylation of four acetate groups of uroporphyrinogen-III to yield coproporphyrinogen-III. The polypeptide is Uroporphyrinogen decarboxylase (Burkholderia mallei (strain NCTC 10247)).